The following is a 140-amino-acid chain: Resuscitation-promoting factor RpfC (140 aa).

The first 31 residues, 1–31 (MTRIAKPLIKSAMAAGLVTASMSLSTAVAHA), serve as a signal peptide directing secretion.

This sequence belongs to the transglycosylase family. Rpf subfamily.

The protein localises to the secreted. In terms of biological role, factor that stimulates resuscitation of dormant cells. Has peptidoglycan (PG) hydrolytic activity. This chain is Resuscitation-promoting factor RpfC (rpfC), found in Mycobacterium tuberculosis (strain ATCC 35801 / TMC 107 / Erdman).